The sequence spans 238 residues: Ribitol-5-phosphate cytidylyltransferase 1 (238 aa).

CTP contacts are provided by residues 7–10 (LAGG) and 81–87 (GSDRNDT).

The protein belongs to the IspD/TarI cytidylyltransferase family. TarI subfamily.

It catalyses the reaction D-ribitol 5-phosphate + CTP + H(+) = CDP-L-ribitol + diphosphate. The protein operates within cell wall biogenesis; poly(ribitol phosphate) teichoic acid biosynthesis. Catalyzes the transfer of the cytidylyl group of CTP to D-ribitol 5-phosphate. In Staphylococcus aureus (strain bovine RF122 / ET3-1), this protein is Ribitol-5-phosphate cytidylyltransferase 1.